A 517-amino-acid chain; its full sequence is DNA-binding protein (517 aa).

The segment covering 1 to 10 (MASRGGNQSS) has biased composition (polar residues). Positions 1–110 (MASRGGNQSS…DISQDSEEER (110 aa)) are disordered. A compositionally biased stretch (low complexity) spans 64–80 (VLVSETSRSSLSPERSN). Basic residues predominate over residues 87 to 96 (PKKKPRKTKH). Phosphotyrosine; by host is present on Tyr-180. Positions 269 and 271 each coordinate Zn(2+). Residues 282 to 316 (IEMDVASENGQRAMKENPDRAKITQNRWGRNVVQL) form a flexible loop region. Zn(2+)-binding residues include Cys-324, Cys-340, Cys-382, Cys-384, Cys-436, and Cys-453. Residues 501 to 517 (VSLPAGHYDSRQNPFDF) form a C-terminal arm, DBP binding region.

The protein belongs to the adenoviridae E2A DNA-binding protein family. Homomultimerizes on viral ssDNA bound to pTP. Forms a initiation complex with viral polymerase, pTP and hosts NFIA and POU2F1/OCT1. Interacts with host SRCAP.

The protein resides in the host nucleus. Functionally, plays a role in the elongation phase of viral strand displacement replication by unwinding the template in an ATP-independent fashion, employing its capacity to form multimers. Also enhances the rate of initiation. Released from template upon second strand synthesis. Assembles in complex with viral pTP, viral pol, host NFIA and host POU2F1/OCT1 on viral origin of replication. Covers the whole ssDNA genome during synthesis. The complementary strand synthesis induces its relese from DNA template. May inhibit cellular transcription mediated by the interaction between host SRCAP and CBP. The sequence is that of DNA-binding protein from Human adenovirus B serotype 7 (HAdV-7).